Consider the following 372-residue polypeptide: Glutamate 5-kinase (372 aa).

Lysine 14 contributes to the ATP binding site. Residues serine 54, aspartate 141, and asparagine 153 each coordinate substrate. Threonine 173–aspartate 174 contacts ATP. The 79-residue stretch at arginine 280–methionine 358 folds into the PUA domain.

Belongs to the glutamate 5-kinase family.

It is found in the cytoplasm. It catalyses the reaction L-glutamate + ATP = L-glutamyl 5-phosphate + ADP. Its pathway is amino-acid biosynthesis; L-proline biosynthesis; L-glutamate 5-semialdehyde from L-glutamate: step 1/2. Functionally, catalyzes the transfer of a phosphate group to glutamate to form L-glutamate 5-phosphate. In Burkholderia vietnamiensis (strain G4 / LMG 22486) (Burkholderia cepacia (strain R1808)), this protein is Glutamate 5-kinase.